The chain runs to 85 residues: U4-theraphotoxin-Hhn1a (85 aa).

The signal sequence occupies residues 1–22 (MKVTLIAILTCAAVLVLHTTAE). A propeptide spanning residues 23 to 48 (EELEAESQLMEVGMPDTELAAVDEER) is cleaved from the precursor. Cystine bridges form between Cys52–Cys66, Cys56–Cys77, and Cys71–Cys82.

The protein belongs to the neurotoxin 12 (Hwtx-2) family. 02 (Hwtx-2) subfamily. As to quaternary structure, monomer. Expressed by the venom gland.

It is found in the secreted. In terms of biological role, neurotoxin active on both insects and mammals. The polypeptide is U4-theraphotoxin-Hhn1a (Cyriopagopus hainanus (Chinese bird spider)).